We begin with the raw amino-acid sequence, 540 residues long: CTP synthase (540 aa).

The amidoligase domain stretch occupies residues 1–265; the sequence is MVRFIFITGG…DNKVLKFFNL (265 aa). Ser-13 contributes to the CTP binding site. UTP is bound at residue Ser-13. ATP contacts are provided by residues 14 to 19 and Asp-71; that span reads SLGKGL. Mg(2+) contacts are provided by Asp-71 and Glu-139. Residues 146–148, 186–191, and Lys-222 each bind CTP; these read DIE and KTKPTQ. Residues 186 to 191 and Lys-222 each bind UTP; that span reads KTKPTQ. One can recognise a Glutamine amidotransferase type-1 domain in the interval 290–539; that stretch reads RIAIIAKYHK…VEAAIKYNKN (250 aa). An L-glutamine-binding site is contributed by Gly-352. Cys-379 serves as the catalytic Nucleophile; for glutamine hydrolysis. Residues 380–383, Glu-403, and Arg-467 contribute to the L-glutamine site; that span reads LGMQ. Residues His-512 and Glu-514 contribute to the active site.

This sequence belongs to the CTP synthase family. As to quaternary structure, homotetramer.

The enzyme catalyses UTP + L-glutamine + ATP + H2O = CTP + L-glutamate + ADP + phosphate + 2 H(+). It carries out the reaction L-glutamine + H2O = L-glutamate + NH4(+). The catalysed reaction is UTP + NH4(+) + ATP = CTP + ADP + phosphate + 2 H(+). The protein operates within pyrimidine metabolism; CTP biosynthesis via de novo pathway; CTP from UDP: step 2/2. Its activity is regulated as follows. Allosterically activated by GTP, when glutamine is the substrate; GTP has no effect on the reaction when ammonia is the substrate. The allosteric effector GTP functions by stabilizing the protein conformation that binds the tetrahedral intermediate(s) formed during glutamine hydrolysis. Inhibited by the product CTP, via allosteric rather than competitive inhibition. In terms of biological role, catalyzes the ATP-dependent amination of UTP to CTP with either L-glutamine or ammonia as the source of nitrogen. Regulates intracellular CTP levels through interactions with the four ribonucleotide triphosphates. This chain is CTP synthase, found in Rickettsia bellii (strain RML369-C).